A 119-amino-acid polypeptide reads, in one-letter code: Immunoglobulin heavy variable 2-70D (119 aa).

Positions 1-19 (MDILCSTLLLLTVPSWVLS) are cleaved as a signal peptide. Gln-20 is modified (pyrrolidone carboxylic acid). Residues 20 to 44 (QVTLKESGPALVKPTQTLTLTCTFS) are framework-1. In terms of domain architecture, Ig-like spans 20–119 (QVTLKESGPA…DTATYYCARI (100 aa)). An intrachain disulfide couples Cys-41 to Cys-116. The interval 45 to 54 (GFSLSTSGMR) is complementarity-determining-1. The segment at 55 to 71 (VSWIRQPPGKALEWLAR) is framework-2. The segment at 72 to 78 (IDWDDDK) is complementarity-determining-2. Residues 79 to 116 (FYSTSLKTRLTISKDTSKNQVVLTMTNMDPVDTATYYC) form a framework-3 region. The segment at 117 to 119 (ARI) is complementarity-determining-3.

In terms of assembly, immunoglobulins are composed of two identical heavy chains and two identical light chains; disulfide-linked.

It is found in the secreted. The protein resides in the cell membrane. Its function is as follows. V region of the variable domain of immunoglobulin heavy chains that participates in the antigen recognition. Immunoglobulins, also known as antibodies, are membrane-bound or secreted glycoproteins produced by B lymphocytes. In the recognition phase of humoral immunity, the membrane-bound immunoglobulins serve as receptors which, upon binding of a specific antigen, trigger the clonal expansion and differentiation of B lymphocytes into immunoglobulins-secreting plasma cells. Secreted immunoglobulins mediate the effector phase of humoral immunity, which results in the elimination of bound antigens. The antigen binding site is formed by the variable domain of one heavy chain, together with that of its associated light chain. Thus, each immunoglobulin has two antigen binding sites with remarkable affinity for a particular antigen. The variable domains are assembled by a process called V-(D)-J rearrangement and can then be subjected to somatic hypermutations which, after exposure to antigen and selection, allow affinity maturation for a particular antigen. The chain is Immunoglobulin heavy variable 2-70D from Homo sapiens (Human).